A 404-amino-acid chain; its full sequence is Photosynthetic reaction center cytochrome c subunit (404 aa).

The N-terminal stretch at 1–22 is a signal peptide; it reads MSPAQQLTLPAVIVVASVMLLG. A lipid anchor (N-palmitoyl cysteine) is attached at Cys-23. Residue Cys-23 is the site of S-diacylglycerol cysteine attachment. The heme site is built by Met-94, Cys-107, Cys-110, His-111, Met-130, His-144, Cys-152, Cys-155, His-156, Met-236, Cys-247, Cys-250, His-251, Cys-307, Cys-310, and His-311. Positions 346-404 are disordered; sequence ASEAAPAAATEAAPEAPAQEVPAAEAVPAAAEPGAAEAAGSVEPAPVEEVAPAPAAQRL.

Component of the photosynthetic reaction center composed of protein subunits L (PufL), M (PufM), H (PuhA) and cytochrome C (PufC). The reaction center interacts with light-harvesting antenna complex LH1. Post-translationally, binds 4 heme groups per subunit.

The protein resides in the cellular chromatophore membrane. The reaction center of purple bacteria contains a tightly bound cytochrome molecule which re-reduces the photo oxidized primary electron donor. The polypeptide is Photosynthetic reaction center cytochrome c subunit (Thermochromatium tepidum (Chromatium tepidum)).